The following is a 444-amino-acid chain: MSAAEEDLIDYSDEELATTEAPAPAAGANGGVKGDSGNLTVSGNAAAAKKGSYVGIHSTGFREFLLKPELLRAISWCGFEHPSEVQQVCIPQAILGTDVLCQAKSGLGKTAVFVLTTLQQVEVVAGETSVLVMCHTRELAYQIRNEYQRFCHFMPDVKIGVFYGGVPISKDVEVLKNPETHPHIIVGTPGRLNALVRDKYLRLNSVKVFVLDECDKMLDQIDMRRDVQEIFRATPPQKQVMMFSATLSQEVRPICKKFMQNPLEIYIDNETKLTLYGLQQYYIKLEEREKNRRLNELLDELSFNQVIIFVKSTVRATELDKLLRECNFPSVAIHSGVSQEERIKRFNDFKDFNKRICVATDVFGRGIDVNKINLAINYDLPPDADSYLHRVGRAGRFGTKGLAISFVSNEADQEVLKAVEKRFEVALPEYPEGGVDSAAYTKTD.

Positions 59–87 (TGFREFLLKPELLRAISWCGFEHPSEVQQ) match the Q motif motif. Residues 90–265 (IPQAILGTDV…KKFMQNPLEI (176 aa)) form the Helicase ATP-binding domain. Residue 103–110 (AKSGLGKT) coordinates ATP. The DECD box signature appears at 212–215 (DECD). The 162-residue stretch at 277–438 (GLQQYYIKLE…EYPEGGVDSA (162 aa)) folds into the Helicase C-terminal domain.

It belongs to the DEAD box helicase family. DECD subfamily.

It localises to the nucleus. The enzyme catalyses ATP + H2O = ADP + phosphate + H(+). Its function is as follows. ATP-binding RNA helicase involved in transcription elongation and required for the export of mRNA out of the nucleus. SUB2 also plays a role in pre-mRNA splicing and spliceosome assembly. May be involved in rDNA and telomeric silencing, and maintenance of genome integrity. In Sclerotinia sclerotiorum (strain ATCC 18683 / 1980 / Ss-1) (White mold), this protein is ATP-dependent RNA helicase sub2 (sub2).